The primary structure comprises 433 residues: O-methyltransferase aclM (433 aa).

Positions 5–37 (LTDAERTALQTSLEALNRQVEATRNILRSNSQK) form a coiled coil. Residues Asp277 and 311 to 313 (GDF) each bind S-adenosyl-L-methionine. His330 acts as the Proton acceptor in catalysis.

Belongs to the class I-like SAM-binding methyltransferase superfamily. Cation-independent O-methyltransferase family. COMT subfamily.

It participates in mycotoxin biosynthesis. O-methyltransferase; part of the gene cluster that mediates the biosynthesis of aspirochlorine (or antibiotic A30641), an unusual halogenated spiro compound with distinctive antifungal properties due to selective inhibition of protein biosynthesis, and which is also active against bacteria, viruses, and murine tumor cells. The non-ribosomal peptide synthetase (NRPS) aclP is responsible the formation of the diketopiperazine (DKP) core from the condensation of 2 phenylalanine residues. One Phe residue is tailored into chlorotyrosine by hydroxylation and chlorination, whereas the second Phe undergoes an unprecedented C-C bond cleavage to be converted into glycine. After formation of the DKP, sulfur is incorporated into the DKP by conjugation with glutathione by aclG, followed by its stepwise degradation to the thiol by aclI, aclJ and aclK, and the dithiol oxidation by aclT. In addition, oxygenases (aclB, aclC, aclL and aclO) and O-methyltransferases (aclM and aclU) act as tailoring enzymes to produce the intermediate dechloroaspirochlorine. Ultimately, chlorination of dechloroaspirochlorine by the halogenase aclH is the last step in the aspirochlorine pathway. This Aspergillus oryzae (strain ATCC 42149 / RIB 40) (Yellow koji mold) protein is O-methyltransferase aclM.